Consider the following 141-residue polypeptide: Hemoglobin subunit alpha (141 aa).

A Globin domain is found at 1–141; the sequence is VLSGEDKNNI…VSTVLTSKYR (141 aa). S3 is modified (phosphoserine). Residues K7 and K11 each carry the N6-succinyllysine modification. An N6-acetyllysine; alternate modification is found at K16. An N6-succinyllysine; alternate modification is found at K16. Y24 bears the Phosphotyrosine mark. K40 carries the N6-succinyllysine modification. S49 is modified (phosphoserine). H58 is a binding site for O2. H87 is a binding site for heme b. The residue at position 102 (S102) is a Phosphoserine. The residue at position 108 (T108) is a Phosphothreonine. Phosphoserine occurs at positions 124 and 131. 2 positions are modified to phosphothreonine: T134 and T137. The residue at position 138 (S138) is a Phosphoserine.

Belongs to the globin family. In terms of assembly, heterotetramer of two alpha chains and two beta chains. In terms of tissue distribution, red blood cells.

Involved in oxygen transport from the lung to the various peripheral tissues. In terms of biological role, hemopressin acts as an antagonist peptide of the cannabinoid receptor CNR1. Hemopressin-binding efficiently blocks cannabinoid receptor CNR1 and subsequent signaling. The polypeptide is Hemoglobin subunit alpha (HBA) (Ondatra zibethicus (Muskrat)).